A 259-amino-acid chain; its full sequence is 3-deoxy-manno-octulosonate cytidylyltransferase (259 aa).

Belongs to the KdsB family.

The protein resides in the cytoplasm. It carries out the reaction 3-deoxy-alpha-D-manno-oct-2-ulosonate + CTP = CMP-3-deoxy-beta-D-manno-octulosonate + diphosphate. The protein operates within nucleotide-sugar biosynthesis; CMP-3-deoxy-D-manno-octulosonate biosynthesis; CMP-3-deoxy-D-manno-octulosonate from 3-deoxy-D-manno-octulosonate and CTP: step 1/1. It functions in the pathway bacterial outer membrane biogenesis; lipopolysaccharide biosynthesis. Its function is as follows. Activates KDO (a required 8-carbon sugar) for incorporation into bacterial lipopolysaccharide in Gram-negative bacteria. This chain is 3-deoxy-manno-octulosonate cytidylyltransferase, found in Xanthomonas oryzae pv. oryzae (strain KACC10331 / KXO85).